The primary structure comprises 595 residues: MTTIASEAYIDDSVNFESFKLDARLLQAIKGSGFTHPTLIQSHAIPLALEEKRDIIAKAATGSGKTLAYLIPVIQTILDYKKSRTNGDEPGTLGIIMVPTRELTQQVTAVLEKLIHYCSKDIKVLNLAADLSTSVLNTLLSENPEIIVGTPSKILNILERNTDTVGIDDLKFLVIDEVDLVLTFGYQDDLDKIAEYLPLKKNLQTFLMSATLSDDIQSLKQKYCRSPAIIKFNDDEINKDKTKLVQYYVRVGEFDKFLFCYVIFKLGLIKGKTLVFVNNIDRGYRLKLVLEQFGIKSCILNNELPANSRQHIVDQFNKNVYHLLIATDDADNIKEFDDEQKDDIQVEEKNDETNTVVAEESTNSTTGIKSKTKNNYKQDKEYGVSRGVDFKNVACVVNFDLPTTAKAYVHRVGRTARAGKSGTAISFVVPLKEFGKHKPSMLPSAKKDEKILSRIIKQQSKLGLEIQPYSFDLKQVEGFRYRMEDGFRAVTQVAVREARIKELKEELLASEKLKRHFEENPIELKSLRHDKELHPARVQNHLKRIPEYLLPENARTDKKKISFIPFHKPNKVGKKSKNSKNKKRKGGKTDALKKF.

The Q motif signature appears at 14–42 (VNFESFKLDARLLQAIKGSGFTHPTLIQS). Positions 46-230 (PLALEEKRDI…QKYCRSPAII (185 aa)) constitute a Helicase ATP-binding domain. 59 to 66 (AATGSGKT) is a binding site for ATP. Residues 176-179 (DEVD) carry the DEAD box motif. The Helicase C-terminal domain maps to 243–477 (KLVQYYVRVG…PYSFDLKQVE (235 aa)). Disordered stretches follow at residues 349–371 (KNDE…IKSK) and 560–595 (KISF…LKKF). A compositionally biased stretch (polar residues) spans 353-371 (TNTVVAEESTNSTTGIKSK). The span at 568–586 (KPNKVGKKSKNSKNKKRKG) shows a compositional bias: basic residues.

Belongs to the DEAD box helicase family. DDX56/DBP9 subfamily.

It is found in the nucleus. Its subcellular location is the nucleolus. The enzyme catalyses ATP + H2O = ADP + phosphate + H(+). In terms of biological role, ATP-binding RNA helicase involved in the biogenesis of 60S ribosomal subunits and is required for the normal formation of 25S and 5.8S rRNAs. This Candida glabrata (strain ATCC 2001 / BCRC 20586 / JCM 3761 / NBRC 0622 / NRRL Y-65 / CBS 138) (Yeast) protein is ATP-dependent RNA helicase DBP9 (DBP9).